A 478-amino-acid polypeptide reads, in one-letter code: Abscisate beta-glucosyltransferase (478 aa).

His-20 serves as the catalytic Proton acceptor. An an anthocyanidin-binding site is contributed by His-20. Catalysis depends on Asp-108, which acts as the Charge relay. The UDP-alpha-D-glucose site is built by Ala-340, Gln-342, His-357, Trp-360, Asn-361, Ser-362, and Glu-365. Ala-380 provides a ligand contact to an anthocyanidin. The UDP-alpha-D-glucose site is built by Glu-381 and Gln-382.

Belongs to the UDP-glycosyltransferase family.

It carries out the reaction 2-cis-(+)-abscisate + UDP-alpha-D-glucose = beta-D-glucopyranosyl cis-(+)-abscisate + UDP. Glucosyltransferase involved in the catabolism of abscisic acid (ABA). Adds a glucosyl group at the C-1 position of ABA; (S)-2-trans-abscisate is a better substrate than the natural (+)-S-abscisate or its enantiomer (-)-R-abscisate. No activity with (-)-phaseic acid (PA), methylated-ABA or with other hormones such as jasmonate, zeatin, auxin (IAA) or gibberellin A3 (GA3). This Phaseolus angularis (Azuki bean) protein is Abscisate beta-glucosyltransferase (AOG).